Consider the following 463-residue polypeptide: L-seryl-tRNA(Sec) selenium transferase (463 aa).

N6-(pyridoxal phosphate)lysine is present on Lys295.

The protein belongs to the SelA family. Homodecamer; pentamer of dimers. Binds only one seryl-tRNA(Sec) per dimer. It depends on pyridoxal 5'-phosphate as a cofactor.

The protein resides in the cytoplasm. The enzyme catalyses L-seryl-tRNA(Sec) + selenophosphate + H(+) = L-selenocysteinyl-tRNA(Sec) + phosphate. It functions in the pathway aminoacyl-tRNA biosynthesis; selenocysteinyl-tRNA(Sec) biosynthesis; selenocysteinyl-tRNA(Sec) from L-seryl-tRNA(Sec) (bacterial route): step 1/1. Its function is as follows. Converts seryl-tRNA(Sec) to selenocysteinyl-tRNA(Sec) required for selenoprotein biosynthesis. This chain is L-seryl-tRNA(Sec) selenium transferase, found in Photorhabdus laumondii subsp. laumondii (strain DSM 15139 / CIP 105565 / TT01) (Photorhabdus luminescens subsp. laumondii).